The sequence spans 198 residues: MASAVSGPSTKQVHPFYCAVCSLPTEYCEFGPSVSKCKAWLEEQDKDEYERVWGEGALASRIGTLSLDKQEKLEADAAKLEKKAAKKAEAEAKKKEQTKIIIKRSERTKRKHQTHIQNLELFGVDLKKAAKQFAGKFATGSSVSKTPQGEEEIVIQGDVGDEIVEMIRQQVGALKGVPADQITRVEVKKKKEAEEPAA.

The SUI1 domain occupies Ile100–Val171.

The protein belongs to the DENR family. In terms of assembly, interacts with the 40S ribosomal subunit.

The protein resides in the cytoplasm. This is Translation machinery-associated protein 22 (TMA22) from Cryptococcus neoformans var. neoformans serotype D (strain B-3501A) (Filobasidiella neoformans).